The chain runs to 259 residues: Phosphate import ATP-binding protein PstB 1 (259 aa).

The region spanning 13–254 (IETKDVDLFY…PAEKETEDYI (242 aa)) is the ABC transporter domain. 45–52 (GPSGCGKS) lines the ATP pocket.

It belongs to the ABC transporter superfamily. Phosphate importer (TC 3.A.1.7) family. In terms of assembly, the complex is composed of two ATP-binding proteins (PstB), two transmembrane proteins (PstC and PstA) and a solute-binding protein (PstS).

Its subcellular location is the cell membrane. The enzyme catalyses phosphate(out) + ATP + H2O = ADP + 2 phosphate(in) + H(+). Functionally, part of the ABC transporter complex PstSACB involved in phosphate import. Responsible for energy coupling to the transport system. In Listeria innocua serovar 6a (strain ATCC BAA-680 / CLIP 11262), this protein is Phosphate import ATP-binding protein PstB 1.